The sequence spans 557 residues: MAATIKWWQQAVVYQVYPRSFQDTNHDGIGDLKGITAHLDYLKQLGIDVIWLNPIYRSPNDDNGYDISDYQQIAADFGTMADFDELLQAAHDRGLKIIMDLVVNHTSDEHPRFKRSRQDRTNQYRDFYFWRSGNGKKAPNNWEAAFGGSAWQYDEQTQQYYLHTFSTKQPDLNWENPTLRESVYTMMTWWLNKGVDGFRMDVINQISKLPGLPDGPLKPHSQFGDARVTNGPRVHEFLQEMNQEVLSQFDIMTVGETHGVTPADALKYAGADQHELDMVFEFQHLRLDNSQHGLGKWSTRKTPLVALKKVISDWQVGLEGRAWNSLFWNNHDTPRAVSRFGDDRPAYRVRSAKMLATCLHLLQGTPYIYQGEELGMTDAHFTELASYRDIESLSAYRDLVTERQLLSPADMMARLAAASRDNSRTPMQWDTEVNAGFSDAAPWLTVNPNYRQINAAAALADPDSVWYYYQHLIQLRHQYPSVTLGSFELLWADDPQYSYMHGNGKADLASLLQFHSRDTVPTTGSISDPTAKCLISNYGEQQPNKLRPYEAWVYQLA.

The Nucleophile role is filled by D201. The active-site Proton donor is E256.

The protein belongs to the glycosyl hydrolase 13 family.

It catalyses the reaction Hydrolysis of terminal, non-reducing (1-&gt;4)-linked alpha-D-glucose residues with release of alpha-D-glucose.. This chain is Alpha-glucosidase (agl), found in Pediococcus pentosaceus.